Reading from the N-terminus, the 454-residue chain is Inactive tetrahydroanabasine acetyltransferase pauper allele (454 aa).

Belongs to the plant acyltransferase family. In terms of assembly, monomer.

In Lupinus albus (White lupine), this protein is Inactive tetrahydroanabasine acetyltransferase pauper allele.